We begin with the raw amino-acid sequence, 619 residues long: Lateral signaling target protein 2 homolog (619 aa).

The FYVE-type zinc-finger motif lies at 501-561; the sequence is DSDCEQCTAC…VCNLCFLYKI (61 aa). Cys-507, Cys-510, Cys-523, Cys-526, Cys-531, Cys-534, Cys-553, and Cys-556 together coordinate Zn(2+). Residues 598-619 are disordered; the sequence is HERSQDGSQSNESPTATTATTI. Residues 603 to 619 are compositionally biased toward polar residues; it reads DGSQSNESPTATTATTI.

The protein belongs to the lst-2 family.

Its function is as follows. Negative regulator of epidermal growth factor receptor (EGFR) signaling. The protein is Lateral signaling target protein 2 homolog of Brugia malayi (Filarial nematode worm).